We begin with the raw amino-acid sequence, 90 residues long: Small ribosomal subunit protein bS16 (90 aa).

This sequence belongs to the bacterial ribosomal protein bS16 family.

This is Small ribosomal subunit protein bS16 from Streptococcus gordonii (strain Challis / ATCC 35105 / BCRC 15272 / CH1 / DL1 / V288).